Here is a 390-residue protein sequence, read N- to C-terminus: MAPALTALNRCFVLGILLLVTAGTAFSQEVQAENVTVVEGSTVEISCHLHQYDGSIVVIQNPVRQTLFFNGTRALKDTRFQLVEFTQKVVKIHLSDAKLEDEGGYFCQLYTEDTHHQIATLTVIVPPDNPLVEVKEQAVEGGEIELTCISPRTKPAATLRWYRDRKELKGFTSKQENGKTFSITNSIRFNVDRKDDGNIVTCEASHPALKGQKKQTQYELDVQFSPTASIQPSQSLVRDGDELNLKCEVTGNPRPTEIIWTRLNDSLPDRAQIQGDLLSFPSLNLQDNGTYSCQVSNKHGRSSDQYVLVVYDPGAIIEAQTQVPYAVIGGILALLVFLVICILIVMVWCSVRQKGSYLTHEASGLDEHGEAREAFLNGGENHKRKEEFFI.

The signal sequence occupies residues 1-27 (MAPALTALNRCFVLGILLLVTAGTAFS). Positions 28-122 (QEVQAENVTV…DTHHQIATLT (95 aa)) constitute an Ig-like V-type domain. Over 28–326 (QEVQAENVTV…IEAQTQVPYA (299 aa)) the chain is Extracellular. N-linked (GlcNAc...) asparagine glycans are attached at residues asparagine 34 and asparagine 70. Intrachain disulfides connect cysteine 47–cysteine 107, cysteine 148–cysteine 202, and cysteine 247–cysteine 293. 2 consecutive Ig-like C2-type domains span residues 127–219 (PDNP…TQYE) and 226–309 (PTAS…YVLV). 2 N-linked (GlcNAc...) asparagine glycosylation sites follow: asparagine 264 and asparagine 288. A helical membrane pass occupies residues 327–347 (VIGGILALLVFLVICILIVMV). Residues 348–390 (WCSVRQKGSYLTHEASGLDEHGEAREAFLNGGENHKRKEEFFI) are Cytoplasmic-facing.

It belongs to the nectin family.

The protein localises to the membrane. Involved in the cell-cell adhesion. This chain is Cell adhesion molecule 4 (cadm4), found in Xenopus laevis (African clawed frog).